We begin with the raw amino-acid sequence, 344 residues long: 4-dimethylallyltryptophan N-methyltransferase easF (344 aa).

This sequence belongs to the methyltransferase superfamily. In terms of assembly, homodimer.

The enzyme catalyses 4-(3-methylbut-2-enyl)-L-tryptophan + S-adenosyl-L-methionine = 4-(3-methylbut-2-enyl)-L-abrine + S-adenosyl-L-homocysteine + H(+). It functions in the pathway alkaloid biosynthesis; ergot alkaloid biosynthesis. In terms of biological role, 4-dimethylallyltryptophan N-methyltransferase; part of the gene cluster that mediates the biosynthesis of fungal ergot alkaloid. DmaW catalyzes the first step of ergot alkaloid biosynthesis by condensing dimethylallyl diphosphate (DMAP) and tryptophan to form 4-dimethylallyl-L-tryptophan. The second step is catalyzed by the methyltransferase easF that methylates 4-dimethylallyl-L-tryptophan in the presence of S-adenosyl-L-methionine, resulting in the formation of 4-dimethylallyl-L-abrine. The catalase easC and the FAD-dependent oxidoreductase easE then transform 4-dimethylallyl-L-abrine to chanoclavine-I which is further oxidized by easD in the presence of NAD(+), resulting in the formation of chanoclavine-I aldehyde. Agroclavine dehydrogenase easG then mediates the conversion of chanoclavine-I aldehyde to agroclavine via a non-enzymatic adduct reaction: the substrate is an iminium intermediate that is formed spontaneously from chanoclavine-I aldehyde in the presence of glutathione. The presence of easA is not required to complete this reaction. Further conversion of agroclavine to paspalic acid is a two-step process involving oxidation of agroclavine to elymoclavine and of elymoclavine to paspalic acid, the second step being performed by the elymoclavine oxidase cloA. Paspalic acid is then further converted to D-lysergic acid. Ergopeptines are assembled from D-lysergic acid and three different amino acids by the D-lysergyl-peptide-synthetases composed each of a monomudular and a trimodular nonribosomal peptide synthetase subunit. LpsB and lpsC encode the monomodular subunits responsible for D-lysergic acid activation and incorporation into the ergopeptine backbone. LpsA1 and A2 subunits encode the trimodular nonribosomal peptide synthetase assembling the tripeptide portion of ergopeptines. LpsA1 is responsible for formation of the major ergopeptine, ergotamine, and lpsA2 for alpha-ergocryptine, the minor ergopeptine of the total alkaloid mixture elaborated by C.purpurea. D-lysergyl-tripeptides are assembled by the nonribosomal peptide synthetases and released as N-(D-lysergyl-aminoacyl)-lactams. Cyclolization of the D-lysergyl-tripeptides is performed by the Fe(2+)/2-ketoglutarate-dependent dioxygenase easH which introduces a hydroxyl group into N-(D-lysergyl-aminoacyl)-lactam at alpha-C of the aminoacyl residue followed by spontaneous condensation with the terminal lactam carbonyl group. This Claviceps purpurea (strain 20.1) (Ergot fungus) protein is 4-dimethylallyltryptophan N-methyltransferase easF.